The following is a 473-amino-acid chain: MLKVTVPSCSASSCSSVTASAAPGTASLVPDYWIDGSNRDALSDFFEVESELGRGATSIVYRCKQKGTQKPYALKVLKKTVDKKIVRTEIGVLLRLSHPNIIKLKEIFETPTEISLVLELVTGGELFDRIVEKGYYSERDAADAVKQILEAVAYLHENGIVHRDLKPENLLYATPAPDAPLKIADFGLSKIVEHQVLMKTVCGTPGYCAPEILRGCAYGPEVDMWSVGIITYILLCGFEPFYDERGDQFMFRRILNCEYYFISPWWDEVSLNAKDLVRKLIVLDPKKRLTTFQALQHPWVTGKAANFVHMDTAQKKLQEFNARRKLKAAVKAVVASSRLGSASSSHGSIQESHKASRDPSPIQDGNEDMKAIPEGEKIQGDGAQAAVKGAQAELMKVQALEKVKGADINAEEAPKMVPKAVEDGIKVADLELEEGLAEEKLKTVEEAAAPREGQGSSAVGFEVPQQDVILPEY.

Residues S12 and S13 each carry the phosphoserine; by autocatalysis modification. Residues 46 to 300 (FEVESELGRG…TFQALQHPWV (255 aa)) form the Protein kinase domain. ATP-binding positions include 52–60 (LGRGATSIV) and K75. T57 carries O-linked (GlcNAc) threonine glycosylation. The O-linked (GlcNAc) serine glycan is linked to S58. A glycan (O-linked (GlcNAc) serine) is linked at S137. The active-site Proton acceptor is D164. S189 carries an O-linked (GlcNAc) serine glycan. Position 200 is a phosphothreonine; by CaMKK1 and CaMKK2 (T200). Residues 305-321 (ANFVHMDTAQKKLQEFN) are autoinhibitory domain. The PP2A-binding stretch occupies residues 306–323 (NFVHMDTAQKKLQEFNAR). The segment at 322–341 (ARRKLKAAVKAVVASSRLGS) is calmodulin-binding. At S336 the chain carries Phosphoserine; by autocatalysis. S341 is subject to Phosphoserine. The segment covering 341–350 (SASSSHGSIQ) has biased composition (low complexity). Disordered stretches follow at residues 341-368 (SASS…GNED) and 445-473 (EEAA…LPEY). Residues S344, S345, and S356 are each glycosylated (O-linked (GlcNAc) serine). S360 is subject to Phosphoserine.

The protein belongs to the protein kinase superfamily. CAMK Ser/Thr protein kinase family. CaMK subfamily. In terms of assembly, monomer. Interacts with protein phosphatase 2A (PPP2CA/PPP2CB); the interaction is mutually exclusive with binding to Ca(2+)/calmodulin. Post-translationally, phosphorylated by CaMKK1 and CaMKK2 on Thr-200. Dephosphorylated by protein phosphatase 2A. Autophosphorylated on Ser-12 and Ser-13. Glycosylation at Ser-189 modulates the phosphorylation of CaMK4 at Thr-200 and negatively regulates its activity toward CREB1 in basal conditions and during early inomycin stimulation. In terms of tissue distribution, expressed in brain, thymus, CD4 T-cells, testis and epithelial ovarian cancer tissue.

The protein localises to the cytoplasm. Its subcellular location is the nucleus. It catalyses the reaction L-seryl-[protein] + ATP = O-phospho-L-seryl-[protein] + ADP + H(+). The enzyme catalyses L-threonyl-[protein] + ATP = O-phospho-L-threonyl-[protein] + ADP + H(+). With respect to regulation, activated by Ca(2+)/calmodulin. Binding of calmodulin results in conformational change that relieves intrasteric autoinhibition and allows phosphorylation of Thr-200 within the activation loop by CaMKK1 or CaMKK2. Phosphorylation of Thr-200 results in a 10-20-fold increase in total activity to generate Ca(2+)/calmodulin-independent activity. Autophosphorylation of the N-terminus Ser-12 and Ser-13 is required for full activation. Inactivated by protein phosphatase 2A (PPP2CA/PPP2CB) which dephosphorylates Thr-200, thereby terminating autonomous activity and helping to maintain the enzyme in its autoinhibited state. In terms of biological role, calcium/calmodulin-dependent protein kinase that operates in the calcium-triggered CaMKK-CaMK4 signaling cascade and regulates, mainly by phosphorylation, the activity of several transcription activators, such as CREB1, MEF2D, JUN and RORA, which play pivotal roles in immune response, inflammation, and memory consolidation. In the thymus, regulates the CD4(+)/CD8(+) double positive thymocytes selection threshold during T-cell ontogeny. In CD4 memory T-cells, is required to link T-cell antigen receptor (TCR) signaling to the production of IL2, IFNG and IL4 (through the regulation of CREB and MEF2). Regulates the differentiation and survival phases of osteoclasts and dendritic cells (DCs). Mediates DCs survival by linking TLR4 and the regulation of temporal expression of BCL2. Phosphorylates the transcription activator CREB1 on 'Ser-133' in hippocampal neuron nuclei and contribute to memory consolidation and long term potentiation (LTP) in the hippocampus. Can activate the MAP kinases MAPK1/ERK2, MAPK8/JNK1 and MAPK14/p38 and stimulate transcription through the phosphorylation of ELK1 and ATF2. Can also phosphorylate in vitro CREBBP, PRM2, MEF2A and STMN1/OP18. In Homo sapiens (Human), this protein is Calcium/calmodulin-dependent protein kinase type IV (CAMK4).